A 603-amino-acid polypeptide reads, in one-letter code: Probable potassium transport system protein Kup (603 aa).

Transmembrane regions (helical) follow at residues 15–35, 43–63, 94–114, 136–156, 163–183, 201–221, 244–264, 284–304, 336–356, 367–387, 391–411, and 415–435; these read GLVF…IFLL, VIGV…VEYA, AAFI…DGVI, IGQG…FSVQ, ITWV…FSGI, AISF…EVIL, AWRL…AFII, IYIP…QAMI, IYIG…IFEF, GLAV…IFYL, MFRS…LLSN, and IPHG…LIII.

Belongs to the HAK/KUP transporter (TC 2.A.72) family.

The protein localises to the cell membrane. The enzyme catalyses K(+)(in) + H(+)(in) = K(+)(out) + H(+)(out). Its function is as follows. Transport of potassium into the cell. Likely operates as a K(+):H(+) symporter. In Methanosarcina acetivorans (strain ATCC 35395 / DSM 2834 / JCM 12185 / C2A), this protein is Probable potassium transport system protein Kup.